We begin with the raw amino-acid sequence, 360 residues long: MTITFTLPPHQTALTVDEHDKVTIWDVAPCPSLPPDQVCVRVEAVALNPSDTKMRGQFATPYAFLGTDYAGTVVAVGSQVTHIQVGDRVYGAQNEMCPRTPDQGAFSQYTVTRGRIWATVPEGWSFEQAASLPAGISTAGLAMKLLGLPLPDPNATTAPALPKPVYVLVYGGSTATATIVMQMLRLSGYIPIATCSPHNFDLAKKHGAEDVFDYRDAGLAQTIRTYTKNNLRYALDCITNVESTTLCFAAIGRAGGRYVSLNPFPEHAATRKMVTADWTLGPTIFGEGSTWPAPYGRPGSEKDRAFGEELWRVAARLVEDGKIVHHPLRVIPGGFEAIKQGMELVRTGQLSGEKVVVKLG.

NADP(+) is bound at residue 50–53 (SDTK). 134 to 141 (AGISTAGL) is a substrate binding site. Residues 173–176 (STAT), 196–199 (SPHN), Tyr-214, 261–262 (LN), and Thr-279 contribute to the NADP(+) site. 281–285 (GPTIF) serves as a coordination point for substrate. 350–351 (LS) provides a ligand contact to NADP(+).

The protein belongs to the zinc-containing alcohol dehydrogenase family. As to quaternary structure, monomer.

The protein operates within polyketide biosynthesis; lovastatin biosynthesis. Its function is as follows. Dehydrogenase; part of the gene cluster that mediates the biosynthesis of monakolin K, also known as lovastatin, and which acts as a potent competitive inhibitor of HMG-CoA reductase. Monakolin K biosynthesis is performed in two stages. The first stage is catalyzed by the nonaketide synthase mokA, which belongs to type I polyketide synthases and catalyzes the iterative nine-step formation of the polyketide. This PKS stage is completed by the action of dehydrogenase mokE, which catalyzes the NADPH-dependent reduction of the unsaturated tetra-, penta- and heptaketide intermediates that arise during the mokA-mediated biosynthesis of the nonaketide chain and leads to dihydromonacolin L. Covalently bound dihydromonacolin L is released from mokA by the mokD esterase. Conversion of dihydromonacolin L into monacolin L and then monacolin J is subsequently performed with the participation of molecular oxygen and P450 monoogygenase mokC. Finally, mokF performs the conversion of monacoline J to monacoline K through the addition of the side-chain diketide moiety (2R)-2-methylbutanoate produced by the diketide synthase mokB. This Monascus pilosus (Red mold) protein is Dehydrogenase mokE.